Consider the following 703-residue polypeptide: Elongation factor G 1 (703 aa).

Residues 8-290 (ERYRNIGISA…AVIDFLPSPV (283 aa)) enclose the tr-type G domain. Residues 17–24 (AHIDAGKT), 88–92 (DTPGH), and 142–145 (NKMD) each bind GTP.

The protein belongs to the TRAFAC class translation factor GTPase superfamily. Classic translation factor GTPase family. EF-G/EF-2 subfamily.

The protein resides in the cytoplasm. In terms of biological role, catalyzes the GTP-dependent ribosomal translocation step during translation elongation. During this step, the ribosome changes from the pre-translocational (PRE) to the post-translocational (POST) state as the newly formed A-site-bound peptidyl-tRNA and P-site-bound deacylated tRNA move to the P and E sites, respectively. Catalyzes the coordinated movement of the two tRNA molecules, the mRNA and conformational changes in the ribosome. This chain is Elongation factor G 1, found in Ralstonia nicotianae (strain ATCC BAA-1114 / GMI1000) (Ralstonia solanacearum).